A 662-amino-acid chain; its full sequence is DNA ligase (662 aa).

Residues 31–35 (DYEYD), 80–81 (SL), and Glu109 each bind NAD(+). The active-site N6-AMP-lysine intermediate is the Lys111. The NAD(+) site is built by Arg132, Glu166, Lys282, and Lys306. Residues Cys400, Cys403, Cys418, and Cys423 each contribute to the Zn(2+) site. One can recognise a BRCT domain in the interval 581–662 (KVSNIFEGKT…FEEMLKGENI (82 aa)).

The protein belongs to the NAD-dependent DNA ligase family. LigA subfamily. Mg(2+) is required as a cofactor. The cofactor is Mn(2+).

It carries out the reaction NAD(+) + (deoxyribonucleotide)n-3'-hydroxyl + 5'-phospho-(deoxyribonucleotide)m = (deoxyribonucleotide)n+m + AMP + beta-nicotinamide D-nucleotide.. In terms of biological role, DNA ligase that catalyzes the formation of phosphodiester linkages between 5'-phosphoryl and 3'-hydroxyl groups in double-stranded DNA using NAD as a coenzyme and as the energy source for the reaction. It is essential for DNA replication and repair of damaged DNA. In Thermoanaerobacter sp. (strain X514), this protein is DNA ligase.